The primary structure comprises 404 residues: MLRAIAEERGRLSLRREVCGLGCFKDDRIVFWTWMFSTYFMEKWAPRQDDMLFYVRRKLAYSGSESGADGRKAAEPEVEVEVYRRDSKKLPGLGDPDIDWEESVCLNLILQKLDYMVTCAVCTRADGGDIHIHKKKSQQVFASPSKHPMDSKGEESKISYPNIFFMIDSFEEVFSDMTVGEGEMVCVELVASDKTNTFQGVIFQGSIRYEALKKVYDNRVSVAARMAQKMSFGFYKYSNMEFVRMKGPQGKGHAEMAVSRVSTGDTSPCGTEEDSSPASPMHERVTSFSTPPTPERNNRPAFFSPSLKRKVPRNRIAEMKKSHSANDSEEFFREDDGGADLHNATNLRSRSLSGTGRSLVGSWLKLNRADGNFLLYAHLTYVTLPLHRILTDILEVRQKPILMT.

2 disordered regions span residues 261 to 307 and 320 to 340; these read VSTG…SPSL and KKSH…GGAD. Phosphoserine is present on residues Ser267, Ser276, and Ser279. A phosphothreonine mark is found at Thr290 and Thr293. Phosphoserine is present on residues Ser304, Ser306, Ser324, Ser358, and Ser362. Residues 320–336 are compositionally biased toward basic and acidic residues; the sequence is KKSHSANDSEEFFREDD.

This is an uncharacterized protein from Homo sapiens (Human).